The primary structure comprises 1091 residues: AP-3 complex subunit beta-1 (1091 aa).

Disordered regions lie at residues 1–32 (MSGN…SPSG) and 267–290 (EDNE…KKKP). A compositionally biased stretch (basic and acidic residues) spans 267–288 (EDNEKNFYESDDEQKEKTDQKK). Serine 276 and serine 609 each carry phosphoserine. The tract at residues 664-807 (AGKAKKENPA…EKEKKTKEDR (144 aa)) is disordered. The span at 667–678 (AKKENPARKFYS) shows a compositional bias: basic and acidic residues. Composition is skewed to acidic residues over residues 679–695 (DSEE…DSES) and 703–718 (EQDE…SEDS). Basic and acidic residues predominate over residues 719 to 736 (SSEHRSDSESVSEVGDKR). Phosphoserine occurs at positions 748 and 750. The span at 763-775 (SDSSSTDSSSVEE) shows a compositional bias: low complexity. Acidic residues predominate over residues 776–789 (SSSDSESESESESE). A compositionally biased stretch (basic and acidic residues) spans 790–807 (SESKKVTMEKEKKTKEDR).

Belongs to the adaptor complexes large subunit family. In terms of assembly, adaptor protein complex 3 (AP-3) is a heterotetramer composed of two large adaptins (delta-type subunit AP3D1 and beta-type subunit AP3B1 or AP3B2), a medium adaptin (mu-type subunit AP3M1 or AP3M2) and a small adaptin (sigma-type subunit APS1 or AP3S2). AP-3 associates with the BLOC-1 complex. Interacts with KIF3A; interaction is direct; interaction is impaired by pyrophosphorylation of AP3B1. Phosphorylated on serine residues. In terms of processing, pyrophosphorylation by 5-diphosphoinositol pentakisphosphate (5-IP7) impairs interaction with KIF3A. Serine pyrophosphorylation is achieved by Mg(2+)-dependent, but enzyme independent transfer of a beta-phosphate from a inositol pyrophosphate to a pre-phosphorylated serine residue.

It localises to the cytoplasmic vesicle. The protein resides in the clathrin-coated vesicle membrane. The protein localises to the golgi apparatus. In terms of biological role, subunit of non-clathrin- and clathrin-associated adaptor protein complex 3 (AP-3) that plays a role in protein sorting in the late-Golgi/trans-Golgi network (TGN) and/or endosomes. The AP complexes mediate both the recruitment of clathrin to membranes and the recognition of sorting signals within the cytosolic tails of transmembrane cargo molecules. AP-3 appears to be involved in the sorting of a subset of transmembrane proteins targeted to lysosomes and lysosome-related organelles. In concert with the BLOC-1 complex, AP-3 is required to target cargos into vesicles assembled at cell bodies for delivery into neurites and nerve terminals. The chain is AP-3 complex subunit beta-1 (AP3B1) from Canis lupus familiaris (Dog).